The following is a 366-amino-acid chain: Chorismate synthase (366 aa).

NADP(+)-binding residues include Arg48 and Arg54. FMN contacts are provided by residues 125 to 127, 238 to 239, Gly278, 293 to 297, and Arg319; these read RSS, NA, and KPTSS.

This sequence belongs to the chorismate synthase family. In terms of assembly, homotetramer. The cofactor is FMNH2.

It carries out the reaction 5-O-(1-carboxyvinyl)-3-phosphoshikimate = chorismate + phosphate. It participates in metabolic intermediate biosynthesis; chorismate biosynthesis; chorismate from D-erythrose 4-phosphate and phosphoenolpyruvate: step 7/7. Its function is as follows. Catalyzes the anti-1,4-elimination of the C-3 phosphate and the C-6 proR hydrogen from 5-enolpyruvylshikimate-3-phosphate (EPSP) to yield chorismate, which is the branch point compound that serves as the starting substrate for the three terminal pathways of aromatic amino acid biosynthesis. This reaction introduces a second double bond into the aromatic ring system. The polypeptide is Chorismate synthase (Thiobacillus denitrificans (strain ATCC 25259 / T1)).